A 134-amino-acid polypeptide reads, in one-letter code: Acyl carrier protein, chloroplastic (134 aa).

The transit peptide at methionine 1 to cysteine 51 directs the protein to the chloroplast. Positions proline 55–valine 130 constitute a Carrier domain. Serine 90 is modified (O-(pantetheine 4'-phosphoryl)serine).

Belongs to the acyl carrier protein (ACP) family. 4'-phosphopantetheine is transferred from CoA to a specific serine of apo-ACP by acpS. This modification is essential for activity because fatty acids are bound in thioester linkage to the sulfhydryl of the prosthetic group. In terms of tissue distribution, seed.

Its subcellular location is the plastid. The protein resides in the chloroplast. The protein operates within lipid metabolism; fatty acid biosynthesis. Functionally, carrier of the growing fatty acid chain in fatty acid biosynthesis. The sequence is that of Acyl carrier protein, chloroplastic (ACL1.A1) from Brassica napus (Rape).